Here is a 365-residue protein sequence, read N- to C-terminus: 2-aminoethylphosphonate--pyruvate transaminase (365 aa).

Lysine 194 is modified (N6-(pyridoxal phosphate)lysine).

The protein belongs to the class-V pyridoxal-phosphate-dependent aminotransferase family. PhnW subfamily. Homodimer. Pyridoxal 5'-phosphate is required as a cofactor.

It catalyses the reaction (2-aminoethyl)phosphonate + pyruvate = phosphonoacetaldehyde + L-alanine. In terms of biological role, involved in phosphonate degradation. The chain is 2-aminoethylphosphonate--pyruvate transaminase from Bacillus cereus (strain G9842).